The primary structure comprises 235 residues: Phosphoribosylformylglycinamidine synthase subunit PurQ (235 aa).

Residues 3–234 (FGVLVFPGSN…LNSLMAQGVT (232 aa)) form the Glutamine amidotransferase type-1 domain. C86 serves as the catalytic Nucleophile. Residues H203 and E205 contribute to the active site.

In terms of assembly, part of the FGAM synthase complex composed of 1 PurL, 1 PurQ and 2 PurS subunits.

It localises to the cytoplasm. It catalyses the reaction N(2)-formyl-N(1)-(5-phospho-beta-D-ribosyl)glycinamide + L-glutamine + ATP + H2O = 2-formamido-N(1)-(5-O-phospho-beta-D-ribosyl)acetamidine + L-glutamate + ADP + phosphate + H(+). The enzyme catalyses L-glutamine + H2O = L-glutamate + NH4(+). It participates in purine metabolism; IMP biosynthesis via de novo pathway; 5-amino-1-(5-phospho-D-ribosyl)imidazole from N(2)-formyl-N(1)-(5-phospho-D-ribosyl)glycinamide: step 1/2. In terms of biological role, part of the phosphoribosylformylglycinamidine synthase complex involved in the purines biosynthetic pathway. Catalyzes the ATP-dependent conversion of formylglycinamide ribonucleotide (FGAR) and glutamine to yield formylglycinamidine ribonucleotide (FGAM) and glutamate. The FGAM synthase complex is composed of three subunits. PurQ produces an ammonia molecule by converting glutamine to glutamate. PurL transfers the ammonia molecule to FGAR to form FGAM in an ATP-dependent manner. PurS interacts with PurQ and PurL and is thought to assist in the transfer of the ammonia molecule from PurQ to PurL. The protein is Phosphoribosylformylglycinamidine synthase subunit PurQ of Acaryochloris marina (strain MBIC 11017).